We begin with the raw amino-acid sequence, 297 residues long: Taste receptor type 2 member 4 (297 aa).

Residues 1–11 (MLWELYVFVFA) lie on the Extracellular side of the membrane. The helical transmembrane segment at 12 to 32 (ASVFLNFVGIIANLFIIVIII) threads the bilayer. Residues 33 to 46 (KTWVNSRRIASPDR) lie on the Cytoplasmic side of the membrane. The chain crosses the membrane as a helical span at residues 47–67 (ILFSLAITRFLTLGLFLLNSV). Residues 68–80 (YIATNTGRSVYFS) lie on the Extracellular side of the membrane. A helical membrane pass occupies residues 81-101 (TFFLLCWKFLDANSLWLVTIL). Residues 102–128 (NSLYCVKITNFQHPVFLLLKRTISMKT) are Cytoplasmic-facing. Residues 129–149 (TSLLLACLLISALTTLLYYML) traverse the membrane as a helical segment. The Extracellular portion of the chain corresponds to 150-171 (SQISRFPEHIIGRNDTSFDLSD). N163 carries an N-linked (GlcNAc...) asparagine glycan. Residues 172–192 (GILTLVASLVLNSLLQFMLNV) traverse the membrane as a helical segment. Residues 193-229 (TFASLLIHSLRRHIQKMQRNRTSFWNPQTEAHMGAMR) lie on the Cytoplasmic side of the membrane. A helical transmembrane segment spans residues 230-250 (LMICFLVLYIPYSIATLLYLP). Over 251 to 260 (SYMRKNLRAQ) the chain is Extracellular. The helical transmembrane segment at 261–281 (AICMIITAAYPPGHSVLLIIT) threads the bilayer. The Cytoplasmic portion of the chain corresponds to 282-297 (HHKLKAKAKKIFCFYK).

It belongs to the G-protein coupled receptor T2R family. As to expression, expressed in subsets of taste receptor cells of the tongue and palate epithelium and exclusively in gustducin-positive cells. Expressed in 15% taste bud cells in circumvallate and foliate papillae but only in 2% in fungiform papillae.

It localises to the membrane. The protein localises to the cell projection. The protein resides in the cilium membrane. In terms of biological role, gustducin-coupled receptor for denatonium and N(6)-propyl-2-thiouracil implicated in the perception of bitter compounds in the oral cavity and the gastrointestinal tract. Signals through PLCB2 and the calcium-regulated cation channel TRPM5. In airway epithelial cells, binding of denatonium increases the intracellular calcium ion concentration and stimulates ciliary beat frequency. This is Taste receptor type 2 member 4 (Tas2r4) from Mus musculus (Mouse).